The sequence spans 130 residues: Riboflavin kinase (130 aa).

10–15 (GFGEGK) provides a ligand contact to CDP. 2 residues coordinate Mg(2+): T39 and N41. The FMN site is built by T96 and E104. 109-112 (VNLR) provides a ligand contact to CDP.

Belongs to the archaeal riboflavin kinase family. It depends on Mg(2+) as a cofactor.

It catalyses the reaction riboflavin + CTP = CDP + FMN + H(+). The protein operates within cofactor biosynthesis; FMN biosynthesis; FMN from riboflavin (CTP route): step 1/1. Its function is as follows. Catalyzes the CTP-dependent phosphorylation of riboflavin (vitamin B2) to form flavin mononucleotide (FMN). This Methanococcus vannielii (strain ATCC 35089 / DSM 1224 / JCM 13029 / OCM 148 / SB) protein is Riboflavin kinase.